The chain runs to 274 residues: NH(3)-dependent NAD(+) synthetase (274 aa).

46–53 (GISGGQDS) is an ATP binding site. Residue D52 coordinates Mg(2+). R140 lines the deamido-NAD(+) pocket. ATP is bound at residue T160. Mg(2+) is bound at residue E165. Residues K173 and D180 each contribute to the deamido-NAD(+) site. ATP contacts are provided by K189 and T211. 260–261 (HK) is a deamido-NAD(+) binding site.

The protein belongs to the NAD synthetase family. As to quaternary structure, homodimer.

It carries out the reaction deamido-NAD(+) + NH4(+) + ATP = AMP + diphosphate + NAD(+) + H(+). It functions in the pathway cofactor biosynthesis; NAD(+) biosynthesis; NAD(+) from deamido-NAD(+) (ammonia route): step 1/1. In terms of biological role, catalyzes the ATP-dependent amidation of deamido-NAD to form NAD. Uses ammonia as a nitrogen source. This is NH(3)-dependent NAD(+) synthetase from Streptococcus pyogenes serotype M2 (strain MGAS10270).